Consider the following 427-residue polypeptide: MSFDINWNQLTIDDTINQSIKEFLDQQFKNISLPSFISNLAVTDFNLGEIPPEVTIRHIGDPFEEFYEDENILGAMNEANNDSKDEHLKNHGDGINKDSGYNSQNLDDEDEDDEDDDEDDEDEEEEDEDDYDDHDLGTINEGISLLNFNENSTTPSANSFAGSAAPPLPPPLNPSRDSFHSILHPYGVNSIIGATGAGSETPTNILNQNYLSSRVLPKISVKQKQPHHDDNDIQLIVEINYKGDMHINLLVNLLVNYPSPNFISLPIKLHITDIVIHSIATIAYLKKSVFLSFLCDVDDTFPDFDSNVQTPTSTTGGNFVDYYSNDATINKERIDIVKKIKIESEIGEVENNILRNVGKVEKFLVEQLRNILRDEIAWPSWICIDMNDDDDEEEEEESEDNDGGNSDLNDNDGKHGDGRTDETEAGE.

One can recognise an SMP-LTD domain in the interval 1-387 (MSFDINWNQL…WPSWICIDMN (387 aa)). Positions 81-96 (NDSKDEHLKNHGDGIN) are enriched in basic and acidic residues. 2 disordered regions span residues 81–168 (NDSK…APPL) and 387–427 (NDDD…EAGE). The segment covering 106–133 (LDDEDEDDEDDDEDDEDEEEEDEDDYDD) has biased composition (acidic residues). Positions 146-161 (LNFNENSTTPSANSFA) are enriched in polar residues. The span at 387-402 (NDDDDEEEEEESEDND) shows a compositional bias: acidic residues. Residues 411-427 (NDGKHGDGRTDETEAGE) show a composition bias toward basic and acidic residues.

Belongs to the MDM12 family. As to quaternary structure, component of the ER-mitochondria encounter structure (ERMES) or MDM complex, composed of MMM1, MDM10, MDM12 and MDM34. An MMM1 homodimer associates with one molecule of MDM12 on each side in a pairwise head-to-tail manner, and the SMP-LTD domains of MMM1 and MDM12 generate a continuous hydrophobic tunnel for phospholipid trafficking.

Its subcellular location is the mitochondrion outer membrane. It is found in the endoplasmic reticulum membrane. Functionally, component of the ERMES/MDM complex, which serves as a molecular tether to connect the endoplasmic reticulum (ER) and mitochondria. Components of this complex are involved in the control of mitochondrial shape and protein biogenesis, and function in nonvesicular lipid trafficking between the ER and mitochondria. MDM12 is required for the interaction of the ER-resident membrane protein MMM1 and the outer mitochondrial membrane-resident beta-barrel protein MDM10. The MDM12-MMM1 subcomplex functions in the major beta-barrel assembly pathway that is responsible for biogenesis of all mitochondrial outer membrane beta-barrel proteins, and acts in a late step after the SAM complex. The MDM10-MDM12-MMM1 subcomplex further acts in the TOM40-specific pathway after the action of the MDM12-MMM1 complex. Essential for establishing and maintaining the structure of mitochondria and maintenance of mtDNA nucleoids. The polypeptide is Mitochondrial distribution and morphology protein 12 (Candida albicans (strain WO-1) (Yeast)).